A 389-amino-acid polypeptide reads, in one-letter code: Protein DDI1 homolog 1 (389 aa).

The disordered stretch occupies residues Ser109–Met132. Asp261 is a catalytic residue.

This sequence belongs to the DDI1 family. In terms of tissue distribution, expressed in most tissues.

It localises to the cytoplasm. The protein localises to the nucleus. Functionally, aspartic protease. Required for the cleavage and activation of transcription factors such as isoform a of the transcription factor skn-1, which in turn regulates the expression of proteasomal subunits such as rpt-3. Plays a key role in the degradation of the potassium channel slo-1, perhaps acting directly, in cleaving slo-1 upstream of the ER-associated degradation pathway (ERAD), and also indirectly, via activation of the transcription factor skn-1, which mediates proteasomal homeostasis. The chain is Protein DDI1 homolog 1 from Caenorhabditis elegans.